The following is a 261-amino-acid chain: ClpXP adapter protein SpxH (261 aa).

This sequence belongs to the SpxH family. In terms of assembly, interacts with Spx.

The protein resides in the cytoplasm. Functionally, adapter protein required for efficient degradation of Spx by ClpXP under non-stress conditions. Interaction with Spx stabilizes Spx and exposes the C-terminus of Spx for recognition and proteolysis by ClpXP. This chain is ClpXP adapter protein SpxH, found in Staphylococcus aureus.